The sequence spans 121 residues: uncharacterized protein (121 aa).

The tract at residues serine 101–alanine 121 is disordered. Positions glutamate 111–alanine 121 are enriched in basic and acidic residues.

It localises to the mitochondrion. This is an uncharacterized protein from Arabidopsis thaliana (Mouse-ear cress).